A 127-amino-acid polypeptide reads, in one-letter code: MSLGKRLKEARQKAGYTQKEAAEKLNIGNNNLSNYERDYRDPDTDTLLKLSNLYNVSTDYLLGKDEVSKKNETDLLNKTINEAIQELKDEDTLLFMNDGEFDEETARLVKKALKNGIKFIDELKKKE.

A compositionally biased stretch (basic and acidic residues) spans 1 to 12; the sequence is MSLGKRLKEARQ. The disordered stretch occupies residues 1–22; sequence MSLGKRLKEARQKAGYTQKEAA. Positions 7-61 constitute an HTH cro/C1-type domain; sequence LKEARQKAGYTQKEAAEKLNIGNNNLSNYERDYRDPDTDTLLKLSNLYNVSTDYL. Positions 18–37 form a DNA-binding region, H-T-H motif; that stretch reads QKEAAEKLNIGNNNLSNYER.

The chain is HTH-type transcriptional regulator ImmR (immR) from Bacillus subtilis (strain 168).